The sequence spans 299 residues: 4-hydroxy-tetrahydrodipicolinate synthase (299 aa).

Position 50 (threonine 50) interacts with pyruvate. Tyrosine 139 serves as the catalytic Proton donor/acceptor. The active-site Schiff-base intermediate with substrate is the lysine 167. Valine 209 contributes to the pyruvate binding site.

The protein belongs to the DapA family. Homotetramer; dimer of dimers.

It localises to the cytoplasm. It carries out the reaction L-aspartate 4-semialdehyde + pyruvate = (2S,4S)-4-hydroxy-2,3,4,5-tetrahydrodipicolinate + H2O + H(+). It participates in amino-acid biosynthesis; L-lysine biosynthesis via DAP pathway; (S)-tetrahydrodipicolinate from L-aspartate: step 3/4. Its function is as follows. Catalyzes the condensation of (S)-aspartate-beta-semialdehyde [(S)-ASA] and pyruvate to 4-hydroxy-tetrahydrodipicolinate (HTPA). The chain is 4-hydroxy-tetrahydrodipicolinate synthase from Synechococcus elongatus (strain ATCC 33912 / PCC 7942 / FACHB-805) (Anacystis nidulans R2).